The primary structure comprises 206 residues: LexA repressor (206 aa).

The H-T-H motif DNA-binding region spans 28–48; sequence RAEIARELGFRSANAAEEHLK. Catalysis depends on for autocatalytic cleavage activity residues Ser123 and Lys160.

It belongs to the peptidase S24 family. As to quaternary structure, homodimer.

The catalysed reaction is Hydrolysis of Ala-|-Gly bond in repressor LexA.. Functionally, represses a number of genes involved in the response to DNA damage (SOS response), including recA and lexA. In the presence of single-stranded DNA, RecA interacts with LexA causing an autocatalytic cleavage which disrupts the DNA-binding part of LexA, leading to derepression of the SOS regulon and eventually DNA repair. This chain is LexA repressor, found in Vibrio parahaemolyticus serotype O3:K6 (strain RIMD 2210633).